Consider the following 557-residue polypeptide: Formate--tetrahydrofolate ligase 2 (557 aa).

66–73 (TPAGEGKT) serves as a coordination point for ATP.

It belongs to the formate--tetrahydrofolate ligase family.

It carries out the reaction (6S)-5,6,7,8-tetrahydrofolate + formate + ATP = (6R)-10-formyltetrahydrofolate + ADP + phosphate. It functions in the pathway one-carbon metabolism; tetrahydrofolate interconversion. The polypeptide is Formate--tetrahydrofolate ligase 2 (Streptococcus pyogenes serotype M6 (strain ATCC BAA-946 / MGAS10394)).